Consider the following 286-residue polypeptide: Phosphatidylserine decarboxylase proenzyme (286 aa).

Residues aspartate 90, histidine 147, and serine 252 each act as charge relay system; for autoendoproteolytic cleavage activity in the active site. Serine 252 functions as the Schiff-base intermediate with substrate; via pyruvic acid; for decarboxylase activity in the catalytic mechanism. Serine 252 is modified (pyruvic acid (Ser); by autocatalysis).

The protein belongs to the phosphatidylserine decarboxylase family. PSD-B subfamily. Prokaryotic type I sub-subfamily. As to quaternary structure, heterodimer of a large membrane-associated beta subunit and a small pyruvoyl-containing alpha subunit. It depends on pyruvate as a cofactor. Is synthesized initially as an inactive proenzyme. Formation of the active enzyme involves a self-maturation process in which the active site pyruvoyl group is generated from an internal serine residue via an autocatalytic post-translational modification. Two non-identical subunits are generated from the proenzyme in this reaction, and the pyruvate is formed at the N-terminus of the alpha chain, which is derived from the carboxyl end of the proenzyme. The autoendoproteolytic cleavage occurs by a canonical serine protease mechanism, in which the side chain hydroxyl group of the serine supplies its oxygen atom to form the C-terminus of the beta chain, while the remainder of the serine residue undergoes an oxidative deamination to produce ammonia and the pyruvoyl prosthetic group on the alpha chain. During this reaction, the Ser that is part of the protease active site of the proenzyme becomes the pyruvoyl prosthetic group, which constitutes an essential element of the active site of the mature decarboxylase.

Its subcellular location is the cell membrane. It carries out the reaction a 1,2-diacyl-sn-glycero-3-phospho-L-serine + H(+) = a 1,2-diacyl-sn-glycero-3-phosphoethanolamine + CO2. It functions in the pathway phospholipid metabolism; phosphatidylethanolamine biosynthesis; phosphatidylethanolamine from CDP-diacylglycerol: step 2/2. Its function is as follows. Catalyzes the formation of phosphatidylethanolamine (PtdEtn) from phosphatidylserine (PtdSer). This is Phosphatidylserine decarboxylase proenzyme from Ectopseudomonas mendocina (strain ymp) (Pseudomonas mendocina).